Here is a 235-residue protein sequence, read N- to C-terminus: Phosphoribosylaminoimidazole-succinocarboxamide synthase (235 aa).

This sequence belongs to the SAICAR synthetase family.

It carries out the reaction 5-amino-1-(5-phospho-D-ribosyl)imidazole-4-carboxylate + L-aspartate + ATP = (2S)-2-[5-amino-1-(5-phospho-beta-D-ribosyl)imidazole-4-carboxamido]succinate + ADP + phosphate + 2 H(+). It functions in the pathway purine metabolism; IMP biosynthesis via de novo pathway; 5-amino-1-(5-phospho-D-ribosyl)imidazole-4-carboxamide from 5-amino-1-(5-phospho-D-ribosyl)imidazole-4-carboxylate: step 1/2. This is Phosphoribosylaminoimidazole-succinocarboxamide synthase from Streptococcus pneumoniae serotype 2 (strain D39 / NCTC 7466).